We begin with the raw amino-acid sequence, 90 residues long: Neuropeptide-like 3 (90 aa).

The N-terminal stretch at 1 to 16 (MFKLCVFVALLSLAAA) is a signal peptide. 2 consecutive propeptides follow at residues 17 to 54 (APAP…LAPQ) and 67 to 79 (AITQ…LLIK). Ile-89 is modified (isoleucine amide).

Its subcellular location is the secreted. The polypeptide is Neuropeptide-like 3 (Nplp3) (Drosophila melanogaster (Fruit fly)).